The following is a 396-amino-acid chain: Elongation factor Tu (396 aa).

In terms of domain architecture, tr-type G spans 10-207; sequence KPHCNIGTIG…VDAYIPQPPR (198 aa). The segment at 19 to 26 is G1; it reads GHVDHGKT. 19–26 serves as a coordination point for GTP; sequence GHVDHGKT. Residue Thr26 participates in Mg(2+) binding. Residues 60–64 form a G2 region; the sequence is GITIS. The segment at 81 to 84 is G3; it reads DCPG. Residues 81-85 and 136-139 contribute to the GTP site; these read DCPGH and NKVD. The interval 136 to 139 is G4; the sequence is NKVD. The interval 174–176 is G5; sequence SAL.

Belongs to the TRAFAC class translation factor GTPase superfamily. Classic translation factor GTPase family. EF-Tu/EF-1A subfamily. Monomer.

Its subcellular location is the cytoplasm. It catalyses the reaction GTP + H2O = GDP + phosphate + H(+). In terms of biological role, GTP hydrolase that promotes the GTP-dependent binding of aminoacyl-tRNA to the A-site of ribosomes during protein biosynthesis. The protein is Elongation factor Tu of Novosphingobium aromaticivorans (strain ATCC 700278 / DSM 12444 / CCUG 56034 / CIP 105152 / NBRC 16084 / F199).